The chain runs to 382 residues: Transcription factor MYB104 (382 aa).

2 HTH myb-type domains span residues 13–69 (KKTF…KPSL) and 70–120 (KKGP…MRLK). 2 DNA-binding regions (H-T-H motif) span residues 41–65 (WTHV…MNHL) and 93–116 (WSQM…NARR). The disordered stretch occupies residues 326–364 (IPKTDTSSESQLFQSSLRSHTDATPDIANTTGYVGSNER). 2 stretches are compositionally biased toward polar residues: residues 329 to 343 (TDTS…SSLR) and 352 to 364 (IANT…SNER).

It is found in the nucleus. This is Transcription factor MYB104 (MYB104) from Arabidopsis thaliana (Mouse-ear cress).